We begin with the raw amino-acid sequence, 158 residues long: Fluoride-specific ion channel FluC 2 (158 aa).

The next 4 membrane-spanning stretches (helical) occupy residues 25 to 45, 63 to 83, 95 to 115, and 126 to 146; these read AWHGQAPVVAVVALGGGIGGT, WTTFWVNVVGCAVIGVFMVVI, PFFGTGVLGGFTTFSTYAVDI, and TALAYLAATLLAALAAVRLAA. Residues Gly103 and Thr106 each coordinate Na(+).

The protein belongs to the fluoride channel Fluc/FEX (TC 1.A.43) family.

Its subcellular location is the cell membrane. The catalysed reaction is fluoride(in) = fluoride(out). With respect to regulation, na(+) is not transported, but it plays an essential structural role and its presence is essential for fluoride channel function. In terms of biological role, fluoride-specific ion channel. Important for reducing fluoride concentration in the cell, thus reducing its toxicity. The chain is Fluoride-specific ion channel FluC 2 from Streptomyces avermitilis (strain ATCC 31267 / DSM 46492 / JCM 5070 / NBRC 14893 / NCIMB 12804 / NRRL 8165 / MA-4680).